A 338-amino-acid chain; its full sequence is Glyceraldehyde-3-phosphate dehydrogenase (338 aa).

NAD(+) contacts are provided by residues 13 to 14 (RI), Asp35, and Arg80. Residues 151-153 (SCT), Thr182, 211-212 (TG), and Arg234 contribute to the D-glyceraldehyde 3-phosphate site. The active-site Nucleophile is Cys152. Asn317 is a binding site for NAD(+).

The protein belongs to the glyceraldehyde-3-phosphate dehydrogenase family. As to quaternary structure, homotetramer.

It is found in the cytoplasm. The catalysed reaction is D-glyceraldehyde 3-phosphate + phosphate + NAD(+) = (2R)-3-phospho-glyceroyl phosphate + NADH + H(+). Its pathway is carbohydrate degradation; glycolysis; pyruvate from D-glyceraldehyde 3-phosphate: step 1/5. This is Glyceraldehyde-3-phosphate dehydrogenase (gpdA) from Aspergillus oryzae (strain ATCC 42149 / RIB 40) (Yellow koji mold).